A 209-amino-acid polypeptide reads, in one-letter code: Guanylate kinase (209 aa).

A Guanylate kinase-like domain is found at 7-185 (GNLYIVAAPS…AAMELQSIVI (179 aa)). 14–21 (APSGGGKT) lines the ATP pocket.

Belongs to the guanylate kinase family.

The protein resides in the cytoplasm. It carries out the reaction GMP + ATP = GDP + ADP. Functionally, essential for recycling GMP and indirectly, cGMP. The polypeptide is Guanylate kinase (Legionella pneumophila (strain Lens)).